We begin with the raw amino-acid sequence, 640 residues long: MRYDVEQPSKLDRVRADYNVHYWSQGFFGIDDQGEVYVSPRKDKAHQTQLSSIVKQLEARDLNLPVLVRFPQILHQRVHNICDAFNQAIEEYDYPNKYLLVYPIKVNQQKEVVDEILASQAELEHKQLGLEAGSKPELLAVLAMAQQASSVIVCNGYKDREYIRLALIGEKLGHKVFIVLEKLSELDLVLKEAKSLGVKPRLGLRIRLASQGAGKWQSSGGEKSKFGLAASQVLTVINRLKAENQLEALQLVHFHLGSQMANIRDVRNGVNEAVRFYCELRELGAHIDFFDVGGGLAVDYDGTRSQSSNSMNYGLHEYARNIVSTVSDVCNLYGQPRPVIISESGRSITAHHAVLITNVIGTEAYSPEEIPAPGADAPMLLKNMWRGFEEVQHGTDDRALIEIYNDTQSDLSEAHSQFATGVLNLEHRAWAEQLSLRIYHELRQKMSNKNRFHRPILDELQERLADKFFVNFSLFQSLPDAWGIDQVFPVLPLSGLEEMNDRRAVMLDITCDSDGAVEQYVEGQGIESTLPVPAWTSDKPYLMGFFLVGAYQEILGDMHNLFGDTHSAVVNINDNGESEIAFINEGDTVEDMMRYVHIDVDKIRTNYRQLVSQRVAKEEQETVLAELELGLSGYTYLEDF.

K105 carries the N6-(pyridoxal phosphate)lysine modification. 290 to 300 lines the substrate pocket; the sequence is FDVGGGLAVDY.

Belongs to the Orn/Lys/Arg decarboxylase class-II family. SpeA subfamily. The cofactor is Mg(2+). Pyridoxal 5'-phosphate is required as a cofactor.

The enzyme catalyses L-arginine + H(+) = agmatine + CO2. In terms of biological role, catalyzes the biosynthesis of agmatine from arginine. The chain is Biosynthetic arginine decarboxylase from Vibrio cholerae serotype O1 (strain ATCC 39315 / El Tor Inaba N16961).